Here is a 467-residue protein sequence, read N- to C-terminus: Asparagine--tRNA ligase (467 aa).

Belongs to the class-II aminoacyl-tRNA synthetase family. Homodimer.

The protein resides in the cytoplasm. It catalyses the reaction tRNA(Asn) + L-asparagine + ATP = L-asparaginyl-tRNA(Asn) + AMP + diphosphate + H(+). This Baumannia cicadellinicola subsp. Homalodisca coagulata protein is Asparagine--tRNA ligase.